Reading from the N-terminus, the 634-residue chain is Probable potassium transport system protein Kup (634 aa).

Helical transmembrane passes span 19 to 39, 62 to 82, 113 to 133, 150 to 170, 177 to 197, 225 to 245, 259 to 279, 291 to 311, 349 to 369, 379 to 399, 406 to 426, and 431 to 451; these read AIGLMVGAVGVCYGDIGTSPL, VLSLIFWSLVWVVSIKYVIFV, FVVVAGLIGAALFYGDSMITP, GLEHWTVPLALIVLIGLFLIQ, IGILFGPVMVLWFGALAALGV, IGVAILGATVLALTGAEALYA, WFLLVLPALVLNYFGQGATIL, LLAPGWALLPMVALSTLATVI, IYIGGVNWALMVGVVLLVLGF, YGVAVTGTMLITTLLMGVVIW, LWLGVPFFCVMLAVDSLFFAA, and VIQGGAFPVIAGIVIFILMST.

The protein belongs to the HAK/KUP transporter (TC 2.A.72) family.

The protein resides in the cell inner membrane. It catalyses the reaction K(+)(in) + H(+)(in) = K(+)(out) + H(+)(out). Functionally, transport of potassium into the cell. Likely operates as a K(+):H(+) symporter. This is Probable potassium transport system protein Kup from Pseudomonas aeruginosa (strain UCBPP-PA14).